A 656-amino-acid polypeptide reads, in one-letter code: CoB--CoM heterodisulfide reductase iron-sulfur subunit A 2 (656 aa).

152–175 contributes to the FAD binding site; the sequence is GGGVSGIQAALDLADMGFEVILVE. 4Fe-4S ferredoxin-type domains follow at residues 238-269, 286-315, 577-606, and 610-639; these read KKPRYVDEDACTGCGACAEVCPIEVPNEFDEG, SVFTIDEEHCIRCGLCEEVCDADAIDFDQE, IVSEVDEEICGGCGTCVELCPYGAIELVEK, and LVAEVTAALCKGCGTCAAACPSGAMEQNHF. [4Fe-4S] cluster contacts are provided by C248, C251, C254, C258, C295, C298, C301, C305, C586, C589, C592, C596, C619, C622, C625, and C629.

The protein belongs to the HdrA family. As to quaternary structure, the ferredoxin:CoB-CoM heterodisulfide reductase is composed of three subunits; HdrA, HdrB and HdrC. [4Fe-4S] cluster serves as cofactor. FAD is required as a cofactor.

It functions in the pathway cofactor metabolism; coenzyme M-coenzyme B heterodisulfide reduction; coenzyme B and coenzyme M from coenzyme M-coenzyme B heterodisulfide: step 1/1. Functionally, part of a complex that catalyzes the reversible reduction of CoM-S-S-CoB to the thiol-coenzymes H-S-CoM (coenzyme M) and H-S-CoB (coenzyme B). This chain is CoB--CoM heterodisulfide reductase iron-sulfur subunit A 2 (hdrA2), found in Methanopyrus kandleri (strain AV19 / DSM 6324 / JCM 9639 / NBRC 100938).